Reading from the N-terminus, the 503-residue chain is 3-octaprenyl-4-hydroxybenzoate carboxy-lyase (503 aa).

Position 176 (Asn176) interacts with Mn(2+). Residues 179 to 181, 193 to 195, and 198 to 199 contribute to the prenylated FMN site; these read IYR, RWL, and RG. Mn(2+) is bound at residue Glu242. The active-site Proton donor is Asp303.

Belongs to the UbiD family. In terms of assembly, homohexamer. It depends on prenylated FMN as a cofactor. The cofactor is Mn(2+).

The protein localises to the cell membrane. The catalysed reaction is a 4-hydroxy-3-(all-trans-polyprenyl)benzoate + H(+) = a 2-(all-trans-polyprenyl)phenol + CO2. It functions in the pathway cofactor biosynthesis; ubiquinone biosynthesis. Catalyzes the decarboxylation of 3-octaprenyl-4-hydroxy benzoate to 2-octaprenylphenol, an intermediate step in ubiquinone biosynthesis. This is 3-octaprenyl-4-hydroxybenzoate carboxy-lyase from Ralstonia pickettii (strain 12J).